Reading from the N-terminus, the 61-residue chain is Weak toxin CM-2 (61 aa).

Intrachain disulfides connect cysteine 3–cysteine 21, cysteine 14–cysteine 37, cysteine 41–cysteine 53, and cysteine 54–cysteine 59.

Belongs to the three-finger toxin family. Short-chain subfamily. Orphan group VI sub-subfamily. In terms of tissue distribution, expressed by the venom gland.

It is found in the secreted. This is Weak toxin CM-2 from Naja haje haje (Egyptian cobra).